We begin with the raw amino-acid sequence, 302 residues long: MPLSSEQLAEIDAQRAHTAPTRRVVSPGMESHLYRAHPVLDHGFVRVIDYMGDDAAICQAARVSYGTGTKSVQNDEGLIRYLMRHWHSTPFEMCELKLHVKLPVFVARQWIRHRTANVNEYSARYSILDREFYIPAPEHVAAQSAVNNQGRGEALQGEEAARVLEILKADSARCYDNYEAMIGQEGQQGLARELARMNLPANIYTQWYWKVDLHNLFHFLRLRADAHAQYEIRVYAETMCRLVADWVPFAYKAFEDYRLGAVNLSAQMVDSLRRMLAGEAVTQETSGLSAREWREFQDVIGR.

Positions 43 to 257 (GFVRVIDYMG…PFAYKAFEDY (215 aa)) constitute a ThyX domain. Residues threonine 89, 112–114 (RHR), and glutamate 120 contribute to the FAD site. Residues 109–112 (QWIR), 120–124 (EYSAR), and arginine 196 contribute to the dUMP site. Positions 112–122 (RHRTANVNEYS) match the ThyX motif motif. FAD-binding positions include 212-214 (DLH) and histidine 218. Residue arginine 223 participates in dUMP binding. Arginine 223 acts as the Involved in ionization of N3 of dUMP, leading to its activation in catalysis.

It belongs to the thymidylate synthase ThyX family. Homotetramer. FAD is required as a cofactor.

It catalyses the reaction dUMP + (6R)-5,10-methylene-5,6,7,8-tetrahydrofolate + NADPH + H(+) = dTMP + (6S)-5,6,7,8-tetrahydrofolate + NADP(+). It participates in pyrimidine metabolism; dTTP biosynthesis. Functionally, catalyzes the reductive methylation of 2'-deoxyuridine-5'-monophosphate (dUMP) to 2'-deoxythymidine-5'-monophosphate (dTMP) while utilizing 5,10-methylenetetrahydrofolate (mTHF) as the methyl donor, and NADPH and FADH(2) as the reductant. The sequence is that of Flavin-dependent thymidylate synthase from Ruegeria pomeroyi (strain ATCC 700808 / DSM 15171 / DSS-3) (Silicibacter pomeroyi).